Consider the following 466-residue polypeptide: MAARAAAAAFLLLLIVGAATAAPDMSIISYNAEHGARGLEEGPTEAEARAAYDLWLAENGGGSPNALGGEHERRFLVFWDNLKFVDAHNARADERGGFRLGMNRFADLTNEEFRATFLGAKVAERSRAAGERYRHDGVEELPESVDWREKGAVAPVKNQGQCGSCWAFSAVSTVESINQLVTGEMITLSEQELVECSTNGQNSGCNGGLMDDAFDFIIKNGGIDTEDDYPYKAVDGKCDINRENAKVVSIDGFEDVPQNDEKSLQKAVAHQPVSVAIEAGGREFQLYHSGVFSGRCGTSLDHGVVAVGYGTDNGKDYWIVRNSWGPKWGESGYVRMERNINVTTGKCGIAMMASYPTKSGANPPKPSPTPPTPPTPPPPSAPDHVCDDNFSCPAGSTCCCAFGFRNLCLVWGCCPVEGATCCKDHASCCPPDYPVCNTRAGTCSASKNSPLSVKALKRTLAKLNTA.

Residues 1–21 form the signal peptide; it reads MAARAAAAAFLLLLIVGAATA. A propeptide spans 22–140 (activation peptide); that stretch reads APDMSIISYN…ERYRHDGVEE (119 aa). 3 disulfides stabilise this stretch: Cys162/Cys205, Cys196/Cys238, and Cys296/Cys347. The active site involves Cys165. Residues His302 and Asn322 contribute to the active site. N-linked (GlcNAc...) asparagine glycosylation occurs at Asn341. Residues 358 to 380 form a disordered region; sequence KSGANPPKPSPTPPTPPTPPPPS. A propeptide spans 362–466 (removed in mature form); sequence NPPKPSPTPP…KRTLAKLNTA (105 aa). A compositionally biased stretch (pro residues) spans 363–380; that stretch reads PPKPSPTPPTPPTPPPPS. 2 disulfide bridges follow: Cys386–Cys398 and Cys392–Cys413. A glycan (N-linked (GlcNAc...) asparagine) is linked at Asn389.

This sequence belongs to the peptidase C1 family. Expressed only in seeds.

In terms of biological role, probable thiol protease. The protein is Oryzain beta chain of Oryza sativa subsp. japonica (Rice).